The sequence spans 251 residues: Imidazole glycerol phosphate synthase subunit HisF (251 aa).

Residues Asp11 and Asp130 contribute to the active site.

It belongs to the HisA/HisF family. Heterodimer of HisH and HisF.

It localises to the cytoplasm. It carries out the reaction 5-[(5-phospho-1-deoxy-D-ribulos-1-ylimino)methylamino]-1-(5-phospho-beta-D-ribosyl)imidazole-4-carboxamide + L-glutamine = D-erythro-1-(imidazol-4-yl)glycerol 3-phosphate + 5-amino-1-(5-phospho-beta-D-ribosyl)imidazole-4-carboxamide + L-glutamate + H(+). Its pathway is amino-acid biosynthesis; L-histidine biosynthesis; L-histidine from 5-phospho-alpha-D-ribose 1-diphosphate: step 5/9. Functionally, IGPS catalyzes the conversion of PRFAR and glutamine to IGP, AICAR and glutamate. The HisF subunit catalyzes the cyclization activity that produces IGP and AICAR from PRFAR using the ammonia provided by the HisH subunit. The polypeptide is Imidazole glycerol phosphate synthase subunit HisF (Thiobacillus denitrificans (strain ATCC 25259 / T1)).